The sequence spans 258 residues: Imidazole glycerol phosphate synthase subunit HisF (258 aa).

Active-site residues include Asp-11 and Asp-130.

This sequence belongs to the HisA/HisF family. Heterodimer of HisH and HisF.

The protein localises to the cytoplasm. The enzyme catalyses 5-[(5-phospho-1-deoxy-D-ribulos-1-ylimino)methylamino]-1-(5-phospho-beta-D-ribosyl)imidazole-4-carboxamide + L-glutamine = D-erythro-1-(imidazol-4-yl)glycerol 3-phosphate + 5-amino-1-(5-phospho-beta-D-ribosyl)imidazole-4-carboxamide + L-glutamate + H(+). Its pathway is amino-acid biosynthesis; L-histidine biosynthesis; L-histidine from 5-phospho-alpha-D-ribose 1-diphosphate: step 5/9. Functionally, IGPS catalyzes the conversion of PRFAR and glutamine to IGP, AICAR and glutamate. The HisF subunit catalyzes the cyclization activity that produces IGP and AICAR from PRFAR using the ammonia provided by the HisH subunit. This chain is Imidazole glycerol phosphate synthase subunit HisF, found in Klebsiella pneumoniae (strain 342).